A 209-amino-acid polypeptide reads, in one-letter code: Hydrogenase expression/formation protein HupM (209 aa).

Residues glutamate 21, aspartate 67, and histidine 98 each contribute to the Ni(2+) site.

Belongs to the peptidase A31 family.

Functionally, not known. Could be involved in the processing of hydrogenase. The protein is Hydrogenase expression/formation protein HupM (hupM) of Azotobacter chroococcum mcd 1.